Consider the following 344-residue polypeptide: Methionine import ATP-binding protein MetN (344 aa).

The ABC transporter domain occupies 2–241; sequence LELKQVGKVY…PQAEVTKAFV (240 aa). Residue 38–45 coordinates ATP; it reads GYSGAGKS.

Belongs to the ABC transporter superfamily. Methionine importer (TC 3.A.1.24) family. As to quaternary structure, the complex is composed of two ATP-binding proteins (MetN), two transmembrane proteins (MetI) and a solute-binding protein (MetQ).

Its subcellular location is the cell membrane. It carries out the reaction L-methionine(out) + ATP + H2O = L-methionine(in) + ADP + phosphate + H(+). The catalysed reaction is D-methionine(out) + ATP + H2O = D-methionine(in) + ADP + phosphate + H(+). Part of the ABC transporter complex MetNIQ involved in methionine import. Responsible for energy coupling to the transport system. This Latilactobacillus sakei subsp. sakei (strain 23K) (Lactobacillus sakei subsp. sakei) protein is Methionine import ATP-binding protein MetN.